A 247-amino-acid polypeptide reads, in one-letter code: MAGHSKWANIKHRKAAQDAQRGKIFTKLIRELVTAAKIGGGDAGSNPRLRAAVDKALASNMTRDTINRAIDRGVGGGDDTNMETRIYEGYGPGGTAVMVECLSDNANRTISQVRPSFTKCGGNLGTEGSVGYLFNKKGLIIIDAGADEDALTEAAIEAGADDIQPQDDGSFEIYTAWEELGDVRDGIEKAGFKIAEAEVSMIPTTSVDLDAETAPKLLRLIEMLEDCDDVQNVYHNGEISDEVAALL.

The protein belongs to the TACO1 family.

The protein localises to the cytoplasm. In Mannheimia succiniciproducens (strain KCTC 0769BP / MBEL55E), this protein is Probable transcriptional regulatory protein MS0710.